The sequence spans 729 residues: Polyribonucleotide nucleotidyltransferase (729 aa).

Mg(2+) is bound by residues Asp485 and Asp491. A KH domain is found at 552 to 611 (PRITTMKVAEDKIRTIIGKGGATIKGLIESTGVSIDIDDSGVIQLFSPDKMALEEAQKQI). The region spanning 621 to 689 (GQTYQGKVSK…KQGRVKLEWK (69 aa)) is the S1 motif domain.

Belongs to the polyribonucleotide nucleotidyltransferase family. In terms of assembly, component of the RNA degradosome, which is a multiprotein complex involved in RNA processing and mRNA degradation. The cofactor is Mg(2+).

The protein localises to the cytoplasm. It carries out the reaction RNA(n+1) + phosphate = RNA(n) + a ribonucleoside 5'-diphosphate. Its function is as follows. Involved in mRNA degradation. Catalyzes the phosphorolysis of single-stranded polyribonucleotides processively in the 3'- to 5'-direction. In Legionella pneumophila (strain Corby), this protein is Polyribonucleotide nucleotidyltransferase.